A 166-amino-acid chain; its full sequence is Bacterial non-heme ferritin (166 aa).

The Ferritin-like diiron domain occupies 2 to 145; that stretch reads LSKNLLEALN…THINYLTRIG (144 aa). Residues glutamate 17, glutamate 50, histidine 53, glutamate 94, and glutamine 127 each coordinate Fe cation.

This sequence belongs to the ferritin family. Prokaryotic subfamily.

Its subcellular location is the cytoplasm. It carries out the reaction 4 Fe(2+) + O2 + 6 H2O = 4 iron(III) oxide-hydroxide + 12 H(+). Functionally, iron-storage protein. This chain is Bacterial non-heme ferritin (ftnA), found in Staphylococcus aureus (strain MRSA252).